We begin with the raw amino-acid sequence, 96 residues long: Large ribosomal subunit protein eL30 (96 aa).

Belongs to the eukaryotic ribosomal protein eL30 family.

This is Large ribosomal subunit protein eL30 from Methanosphaerula palustris (strain ATCC BAA-1556 / DSM 19958 / E1-9c).